The sequence spans 598 residues: Thiol:disulfide interchange protein DsbD (598 aa).

The first 21 residues, 1 to 21, serve as a signal peptide directing secretion; it reads MRALLTFFVAGLLVLSSPAMA. A disulfide bond links cysteine 130 and cysteine 136. The segment at 158-180 is disordered; sequence TMPTQTASPLDTSTANTSTPQPL. The segment covering 159-180 has biased composition (polar residues); the sequence is MPTQTASPLDTSTANTSTPQPL. 8 consecutive transmembrane segments (helical) span residues 198-220, 240-262, 274-296, 324-346, 353-375, 385-407, 414-431, and 446-468; these read LLFL…YPIL, LVYV…SAGL, LIGL…TLQL, AISG…LYVA, TGGV…VAVF, GWMD…FLLE, WSTA…GWLY, and AVGI…YWFA. A disulfide bridge connects residues cysteine 212 and cysteine 333. The region spanning 456–598 is the Thioredoxin domain; it reads FASAQPALNY…FLEHIQRISN (143 aa). Residues cysteine 513 and cysteine 516 are joined by a disulfide bond.

This sequence belongs to the thioredoxin family. DsbD subfamily.

Its subcellular location is the cell inner membrane. The catalysed reaction is [protein]-dithiol + NAD(+) = [protein]-disulfide + NADH + H(+). It catalyses the reaction [protein]-dithiol + NADP(+) = [protein]-disulfide + NADPH + H(+). In terms of biological role, required to facilitate the formation of correct disulfide bonds in some periplasmic proteins and for the assembly of the periplasmic c-type cytochromes. Acts by transferring electrons from cytoplasmic thioredoxin to the periplasm. This transfer involves a cascade of disulfide bond formation and reduction steps. This chain is Thiol:disulfide interchange protein DsbD, found in Vibrio vulnificus (strain YJ016).